Here is a 147-residue protein sequence, read N- to C-terminus: MKVLLIKDVKSLGKAGEIKEVKDGYGQNFLINKGLAKLATPDVVENWKAEQARQEKELKEEIERFEAEKKMLEAHTIRIEKQSAPVGIKGSVGNADISAAIKEQLDIDLDKKHINLKKALKSTGIHEVDAKLGHGIHATLKVEVVGV.

This sequence belongs to the bacterial ribosomal protein bL9 family.

Functionally, binds to the 23S rRNA. This chain is Large ribosomal subunit protein bL9, found in Sulfurovum sp. (strain NBC37-1).